The sequence spans 420 residues: Glutamate-1-semialdehyde 2,1-aminomutase (420 aa).

Lysine 261 is subject to N6-(pyridoxal phosphate)lysine.

The protein belongs to the class-III pyridoxal-phosphate-dependent aminotransferase family. HemL subfamily. Pyridoxal 5'-phosphate is required as a cofactor.

Its subcellular location is the cytoplasm. It carries out the reaction (S)-4-amino-5-oxopentanoate = 5-aminolevulinate. It participates in porphyrin-containing compound metabolism; protoporphyrin-IX biosynthesis; 5-aminolevulinate from L-glutamyl-tRNA(Glu): step 2/2. The protein is Glutamate-1-semialdehyde 2,1-aminomutase of Thermoplasma volcanium (strain ATCC 51530 / DSM 4299 / JCM 9571 / NBRC 15438 / GSS1).